The following is a 305-amino-acid chain: Probable alpha-L-glutamate ligase (305 aa).

Positions 119–301 constitute an ATP-grasp domain; the sequence is LQVLAAQHIP…IAGLIIDYLL (183 aa). ATP contacts are provided by residues lysine 155, 192-193, aspartate 201, and 225-227; these read DF and RAN. The Mg(2+) site is built by aspartate 262, glutamate 274, and asparagine 276. Residues aspartate 262, glutamate 274, and asparagine 276 each contribute to the Mn(2+) site.

This sequence belongs to the RimK family. Mg(2+) is required as a cofactor. It depends on Mn(2+) as a cofactor.

The sequence is that of Probable alpha-L-glutamate ligase from Haemophilus ducreyi (strain 35000HP / ATCC 700724).